The sequence spans 798 residues: Protocadherin beta-2 (798 aa).

Residues 1–30 (MEAGEGKERVPKQRQVLIFFVLLGIAQASC) form the signal peptide. Residues 31-692 (QPRHYSVAEE…AQADLLTVYL (662 aa)) are Extracellular-facing. Cadherin domains lie at 37-135 (VAEE…SPVF), 136-244 (LDKE…VPEF), 249-349 (YEVQ…PPEL), 354-453 (LINQ…APAF), and 458-563 (YTLF…SPFV). A glycan (N-linked (GlcNAc...) asparagine) is linked at Asn171. Lys299 is modified (N6-acetyllysine). 2 N-linked (GlcNAc...) asparagine glycosylation sites follow: Asn420 and Asn438. N-linked (GlcNAc...) asparagine glycosylation occurs at Asn569. In terms of domain architecture, Cadherin 6 spans 570–673 (GSAPCTELVP…LVDGFSQPYL (104 aa)). Residues 693–713 (VVALASVSSLFLFSVLLFVAV) form a helical membrane-spanning segment. The Cytoplasmic portion of the chain corresponds to 714 to 798 (RLCRRSRAAS…PSFRKSFEFT (85 aa)).

The protein localises to the cell membrane. Functionally, potential calcium-dependent cell-adhesion protein. May be involved in the establishment and maintenance of specific neuronal connections in the brain. The sequence is that of Protocadherin beta-2 (PCDHB2) from Homo sapiens (Human).